The sequence spans 248 residues: Transmembrane protein 223 (248 aa).

Helical transmembrane passes span 46–68 (IFRP…AAVA), 84–104 (LLAI…HFAF), and 140–160 (YGFT…ALLF).

It belongs to the TMEM223 family.

It localises to the mitochondrion inner membrane. Its function is as follows. Mitochondrial ribosome-associated protein involved in the first steps of cytochrome c oxidase complex (complex IV) biogenesis. Stimulates the translation of MT-CO1 mRNA and is a constituent of early MT-CO1 assembly intermediates. This is Transmembrane protein 223 from Danio rerio (Zebrafish).